The chain runs to 455 residues: Kynurenine 3-monooxygenase (455 aa).

A run of 2 helical transmembrane segments spans residues 393-416 (WLFR…SMPY) and 429-453 (LLWR…YWQR).

The protein belongs to the aromatic-ring hydroxylase family. KMO subfamily. FAD is required as a cofactor.

It is found in the mitochondrion. The protein localises to the membrane. It catalyses the reaction L-kynurenine + NADPH + O2 + H(+) = 3-hydroxy-L-kynurenine + NADP(+) + H2O. It functions in the pathway cofactor biosynthesis; NAD(+) biosynthesis; quinolinate from L-kynurenine: step 1/3. In terms of biological role, catalyzes the hydroxylation of L-kynurenine (L-Kyn) to form 3-hydroxy-L-kynurenine (L-3OHKyn). Required for synthesis of quinolinic acid. The protein is Kynurenine 3-monooxygenase of Drosophila willistoni (Fruit fly).